Reading from the N-terminus, the 251-residue chain is tRNA (guanine-N(1)-)-methyltransferase (251 aa).

S-adenosyl-L-methionine is bound by residues Gly113 and 133–138 (IGDYVL).

It belongs to the RNA methyltransferase TrmD family. Homodimer.

The protein resides in the cytoplasm. The catalysed reaction is guanosine(37) in tRNA + S-adenosyl-L-methionine = N(1)-methylguanosine(37) in tRNA + S-adenosyl-L-homocysteine + H(+). In terms of biological role, specifically methylates guanosine-37 in various tRNAs. The polypeptide is tRNA (guanine-N(1)-)-methyltransferase (Pectobacterium carotovorum subsp. carotovorum (strain PC1)).